We begin with the raw amino-acid sequence, 262 residues long: Hydroxyethylthiazole kinase (262 aa).

Met-50 is a substrate binding site. Positions 125 and 171 each coordinate ATP. Substrate is bound at residue Gly-198.

This sequence belongs to the Thz kinase family. Requires Mg(2+) as cofactor.

The enzyme catalyses 5-(2-hydroxyethyl)-4-methylthiazole + ATP = 4-methyl-5-(2-phosphooxyethyl)-thiazole + ADP + H(+). It functions in the pathway cofactor biosynthesis; thiamine diphosphate biosynthesis; 4-methyl-5-(2-phosphoethyl)-thiazole from 5-(2-hydroxyethyl)-4-methylthiazole: step 1/1. Its function is as follows. Catalyzes the phosphorylation of the hydroxyl group of 4-methyl-5-beta-hydroxyethylthiazole (THZ). This chain is Hydroxyethylthiazole kinase, found in Escherichia coli (strain SMS-3-5 / SECEC).